The primary structure comprises 506 residues: CDK5 regulatory subunit-associated protein 3 (506 aa).

3 short sequence motifs (shuffled ATG8-binding motif) span residues 267 to 270 (IDWG), 292 to 295 (IDWG), and 310 to 313 (IDWG). Residues 269–506 (WGDFGVEAVS…RPVNLMGTSL (238 aa)) are required for interaction with UFL1 and mediates interaction with CHEK1. The tract at residues 355–370 (DELMELEIFLAQRAVE) is RPL10a-binding domain (RBD). Lys-450 participates in a covalent cross-link: Glycyl lysine isopeptide (Lys-Gly) (interchain with G-Cter in SUMO2).

It belongs to the CDK5RAP3 family. Substrate adapter component of the UFM1 ribosome E3 ligase (UREL) complex, composed of UFL1, DDRGK1 and CDK5RAP3. Interaction with UFL1 anchors CDK5RAP3 in the cytoplasm, preventing its translocation to the nucleus which allows expression of the CCND1 cyclin and progression of cells through the G1/S transition. Interacts with ATG8 family proteins MAP1LC3A, MAP1LC3B, GABARAP, GABARAPL1 and GABARAPL2. Interacts with CDK5R1; competes with CDK5RAP1 and CDK5RAP2. Interacts with RELA. Interacts with CHEK1; may negatively regulate CHEK1 and thereby stimulate entry into mitosis. Interacts with CDKN2A/ARF and MDM2; forms a ternary complex involved in regulation of p53/TP53. Interacts with MAPK14. Interacts with CCNB1. Interacts with TUBG1; may regulate CDK5RAP3 in mitotic G2/M transition checkpoint. As to quaternary structure, (Microbial infection) Interacts with hepatitis B virus large envelope protein mutant pre-s2; promotes mitotic entry. May be phosphorylated by CDK5. In terms of processing, ubiquitinated. Probably triggers proteasomal degradation and is negatively regulated by UFL1. Post-translationally, may be ufmylated. Cleaved by caspases early during apoptosis, the resulting peptides may play a role in rupture of the nuclear envelope. In terms of tissue distribution, ubiquitously expressed. Expressed in heart, brain, placenta, lung, liver, skeletal muscle, kidney and pancreas. Isoform 3 is expressed in kidney, liver, skeletal muscle and placenta.

Its subcellular location is the endoplasmic reticulum membrane. It is found in the cytoplasm. It localises to the nucleus. The protein localises to the cytoskeleton. The protein resides in the microtubule organizing center. Its subcellular location is the centrosome. In terms of biological role, substrate adapter of E3 ligase complexes mediating ufmylation, the covalent attachment of the ubiquitin-like modifier UFM1 to substrate proteins, and which is involved in various processes, such as ribosome recycling and reticulophagy (also called ER-phagy). As part of the UREL complex, plays a key role in ribosome recycling by promoting mono-ufmylation of RPL26/uL24 subunit of the 60S ribosome. Ufmylation of RPL26/uL24 occurs on free 60S ribosomes following ribosome dissociation: it weakens the junction between post-termination 60S subunits and SEC61 translocons, promoting release and recycling of the large ribosomal subunit from the endoplasmic reticulum membrane. Ufmylation of RPL26/uL24 and subsequent 60S ribosome recycling either take place after normal termination of translation or after ribosome stalling during cotranslational translocation at the endoplasmic reticulum. Within the UREL complex, CDK5RAP3 acts as a substrate adapter that constrains UFL1 ligase activity to mono-ufmylate RPL26/uL24 at 'Lys-134'. The UREL complex is also involved in reticulophagy in response to endoplasmic reticulum stress by promoting ufmylation of proteins such as CYB5R3, thereby promoting lysosomal degradation of ufmylated proteins. Also acts as a regulator of transcription: negatively regulates NF-kappa-B-mediated gene transcription through the control of RELA phosphorylation. Also regulates mitotic G2/M transition checkpoint and mitotic G2 DNA damage checkpoint. Through its interaction with CDKN2A/ARF and MDM2 may induce MDM2-dependent p53/TP53 ubiquitination, stabilization and activation in the nucleus, thereby promoting G1 cell cycle arrest and inhibition of cell proliferation. May also play a role in the rupture of the nuclear envelope during apoptosis. May regulate MAPK14 activity by regulating its dephosphorylation by PPM1D/WIP1. Required for liver development. (Microbial infection) May be negatively regulated by hepatitis B virus large envelope protein mutant pre-s2 to promote mitotic entry. The protein is CDK5 regulatory subunit-associated protein 3 of Homo sapiens (Human).